We begin with the raw amino-acid sequence, 129 residues long: NADH-quinone oxidoreductase subunit A (129 aa).

The next 3 helical transmembrane spans lie at 9–29 (FPIG…LGLA), 68–88 (LLFI…VLLL), and 97–117 (LGWP…AGLV).

The protein belongs to the complex I subunit 3 family. As to quaternary structure, NDH-1 is composed of 14 different subunits. Subunits NuoA, H, J, K, L, M, N constitute the membrane sector of the complex.

It is found in the cell inner membrane. The catalysed reaction is a quinone + NADH + 5 H(+)(in) = a quinol + NAD(+) + 4 H(+)(out). NDH-1 shuttles electrons from NADH, via FMN and iron-sulfur (Fe-S) centers, to quinones in the respiratory chain. The immediate electron acceptor for the enzyme in this species is believed to be ubiquinone. Couples the redox reaction to proton translocation (for every two electrons transferred, four hydrogen ions are translocated across the cytoplasmic membrane), and thus conserves the redox energy in a proton gradient. The protein is NADH-quinone oxidoreductase subunit A of Anaeromyxobacter dehalogenans (strain 2CP-C).